A 364-amino-acid polypeptide reads, in one-letter code: RNA polymerase sigma factor SigA (364 aa).

The interval 132 to 202 is sigma-70 factor domain-2; the sequence is LAEANLRLVV…TRAIADQART (71 aa). An Interaction with polymerase core subunit RpoC motif is present at residues 156–159; that stretch reads DLIQ. The tract at residues 211 to 287 is sigma-70 factor domain-3; the sequence is ETINKLIRVQ…DDVIESPVDY (77 aa). The tract at residues 300-353 is sigma-70 factor domain-4; sequence VMDTLTDREENVLRMRFGLDDGRMHTLEDVGKQFKVTRERIRQIEAKAIKKLRH. Positions 326-345 form a DNA-binding region, H-T-H motif; that stretch reads LEDVGKQFKVTRERIRQIEA.

This sequence belongs to the sigma-70 factor family. RpoD/SigA subfamily. As to quaternary structure, interacts transiently with the RNA polymerase catalytic core.

Its subcellular location is the cytoplasm. Sigma factors are initiation factors that promote the attachment of RNA polymerase to specific initiation sites and are then released. This sigma factor is the primary sigma factor during exponential growth. The chain is RNA polymerase sigma factor SigA from Lactococcus lactis subsp. cremoris (Streptococcus cremoris).